A 482-amino-acid chain; its full sequence is Bifunctional protein GlmU (482 aa).

Residues 1–241 (MTASTEAAVV…SALVTGVNDR (241 aa)) are pyrophosphorylase. Residues 12 to 15 (LAAG), lysine 26, glutamine 83, 88 to 89 (GT), 112 to 114 (SGD), glycine 151, glutamate 166, asparagine 181, and asparagine 239 each bind UDP-N-acetyl-alpha-D-glucosamine. A Mg(2+)-binding site is contributed by aspartate 114. Asparagine 239 is a binding site for Mg(2+). The tract at residues 242–262 (VQLSDLGKVLNRRIVAAHQRA) is linker. Positions 263–482 (GVTIIDPGST…AARKALGDES (220 aa)) are N-acetyltransferase. Arginine 344 and lysine 362 together coordinate UDP-N-acetyl-alpha-D-glucosamine. Histidine 374 serves as the catalytic Proton acceptor. Residues tyrosine 377 and asparagine 388 each coordinate UDP-N-acetyl-alpha-D-glucosamine. Residues alanine 391, 397–398 (NY), serine 416, and alanine 434 each bind acetyl-CoA. Residues 463-482 (KKRPGSAADKAARKALGDES) are disordered. Residues 472–482 (KAARKALGDES) show a composition bias toward basic and acidic residues.

This sequence in the N-terminal section; belongs to the N-acetylglucosamine-1-phosphate uridyltransferase family. The protein in the C-terminal section; belongs to the transferase hexapeptide repeat family. As to quaternary structure, homotrimer. Requires Mg(2+) as cofactor.

The protein localises to the cytoplasm. It carries out the reaction alpha-D-glucosamine 1-phosphate + acetyl-CoA = N-acetyl-alpha-D-glucosamine 1-phosphate + CoA + H(+). The enzyme catalyses N-acetyl-alpha-D-glucosamine 1-phosphate + UTP + H(+) = UDP-N-acetyl-alpha-D-glucosamine + diphosphate. It functions in the pathway nucleotide-sugar biosynthesis; UDP-N-acetyl-alpha-D-glucosamine biosynthesis; N-acetyl-alpha-D-glucosamine 1-phosphate from alpha-D-glucosamine 6-phosphate (route II): step 2/2. The protein operates within nucleotide-sugar biosynthesis; UDP-N-acetyl-alpha-D-glucosamine biosynthesis; UDP-N-acetyl-alpha-D-glucosamine from N-acetyl-alpha-D-glucosamine 1-phosphate: step 1/1. It participates in bacterial outer membrane biogenesis; LPS lipid A biosynthesis. Its function is as follows. Catalyzes the last two sequential reactions in the de novo biosynthetic pathway for UDP-N-acetylglucosamine (UDP-GlcNAc). The C-terminal domain catalyzes the transfer of acetyl group from acetyl coenzyme A to glucosamine-1-phosphate (GlcN-1-P) to produce N-acetylglucosamine-1-phosphate (GlcNAc-1-P), which is converted into UDP-GlcNAc by the transfer of uridine 5-monophosphate (from uridine 5-triphosphate), a reaction catalyzed by the N-terminal domain. This is Bifunctional protein GlmU from Mycolicibacterium smegmatis (strain ATCC 700084 / mc(2)155) (Mycobacterium smegmatis).